The following is a 470-amino-acid chain: Trigger factor (470 aa).

The 80-residue stretch at 164–243 folds into the PPIase FKBP-type domain; that stretch reads GDYVVIDMTA…VTAVKVQELP (80 aa). Acidic residues-rich tracts occupy residues 424 to 438 and 445 to 470; these read ETDA…ESVE and AEDD…AAKA. The interval 424–470 is disordered; that stretch reads ETDAEDAAEGVESVEVDLSAAAEDDAEETSDEPAAEDTATEDEAAKA.

It belongs to the FKBP-type PPIase family. Tig subfamily.

The protein localises to the cytoplasm. It catalyses the reaction [protein]-peptidylproline (omega=180) = [protein]-peptidylproline (omega=0). Involved in protein export. Acts as a chaperone by maintaining the newly synthesized protein in an open conformation. Functions as a peptidyl-prolyl cis-trans isomerase. The protein is Trigger factor of Beutenbergia cavernae (strain ATCC BAA-8 / DSM 12333 / CCUG 43141 / JCM 11478 / NBRC 16432 / NCIMB 13614 / HKI 0122).